A 289-amino-acid polypeptide reads, in one-letter code: ATP synthase gamma chain (289 aa).

This sequence belongs to the ATPase gamma chain family. In terms of assembly, F-type ATPases have 2 components, CF(1) - the catalytic core - and CF(0) - the membrane proton channel. CF(1) has five subunits: alpha(3), beta(3), gamma(1), delta(1), epsilon(1). CF(0) has three main subunits: a, b and c.

It localises to the cell membrane. Functionally, produces ATP from ADP in the presence of a proton gradient across the membrane. The gamma chain is believed to be important in regulating ATPase activity and the flow of protons through the CF(0) complex. This is ATP synthase gamma chain from Mycoplasmoides gallisepticum (strain R(low / passage 15 / clone 2)) (Mycoplasma gallisepticum).